The chain runs to 104 residues: MASLFIIMDKRFAVFASSDKPNNCSRKNMFFLKNIIVLSNYLYLLYKAWIVCTTISLCCDFPLFNFLFIAIPYFTEILYNDSSLLWFLFVSLCFITLSFQSLEI.

Helical transmembrane passes span 30 to 50 (FFLK…KAWI), 54 to 74 (TISL…IPYF), and 84 to 104 (LLWF…SLEI).

It is found in the endoplasmic reticulum membrane. Functionally, has a role in meiosis. The protein is Meiotically up-regulated gene 150 protein (mug150) of Schizosaccharomyces pombe (strain 972 / ATCC 24843) (Fission yeast).